A 1057-amino-acid chain; its full sequence is Structural maintenance of chromosomes protein 6B (1057 aa).

The 1026-residue stretch at I22–I1047 folds into the Zinc-hook domain. G49 to S56 contacts ATP. A coiled-coil region spans residues K135–K448. Positions V449 to L632 are flexible hinge. The stretch at C633–C904 forms a coiled coil. The segment covering K818 to A828 has biased composition (basic and acidic residues). The interval K818–G845 is disordered.

Belongs to the SMC family. SMC6 subfamily. In terms of assembly, forms a heterodimer with SMC5. The SMC5-SMC6 complex is composed of the SMC5 and SMC6 heterodimer attached via their hinge domain and from the non-SMC subunit NSE4A or NSE4B. As to expression, expressed in seedlings, rosette leaves and floral buds.

The protein resides in the nucleus. It is found in the chromosome. Core component of the SMC5-SMC6 complex that promotes sister chromatid alignment after DNA damage and facilitates double-stranded DNA breaks (DSBs) repair via homologous recombination between sister chromatids. This chain is Structural maintenance of chromosomes protein 6B (SMC6B), found in Arabidopsis thaliana (Mouse-ear cress).